Reading from the N-terminus, the 259-residue chain is MKAAVLAVALVFLTGCQAWEFWQQDEPQSQWDRVKDFATVYVDAVKDSGRDYVSQFESSTLGKQLNLNLLDNWDTLGSTVGRLQEQLGPVTQEFWANLEKETDWLRNEMNKDLENVKQKMQPHLDEFQEKWNEEVEAYRQKLEPLGTELHKNAKEMQRHLKVVAEEFRDRMRVNADALRAKFGLYSDQMRENLAQRLTEIKNHPTLIEYHTKASDHLKTLGEKAKPALDDLGQGLMPVLEAWKAKIMSMIDEAKKKLNA.

Residues 1–18 (MKAAVLAVALVFLTGCQA) form the signal peptide. 2 repeat units span residues 67–88 (LNLLDNWDTLGSTVGRLQEQLG) and 89–110 (PVTQEFWANLEKETDWLRNEMN). The segment at 67 to 259 (LNLLDNWDTL…IDEAKKKLNA (193 aa)) is 10 X approximate tandem repeats. Methionine 109 bears the Methionine sulfoxide mark. The 3; half-length repeat unit spans residues 111–121 (KDLENVKQKMQ). The stretch at 122–143 (PHLDEFQEKWNEEVEAYRQKLE) is repeat 4. The stretch at 144-161 (PLGTELHKNAKEMQRHLK) is one 5; truncated repeat. Residues 162-183 (VVAEEFRDRMRVNADALRAKFG) form repeat 6. Residues 184–203 (LYSDQMRENLAQRLTEIKNH) form a 7; truncated repeat. Methionine 189 bears the Methionine sulfoxide mark. Copy 8 of the repeat occupies 204-225 (PTLIEYHTKASDHLKTLGEKAK). The 9; half-length repeat unit spans residues 226 to 236 (PALDDLGQGLM). At methionine 236 the chain carries Methionine sulfoxide. Copy 10 of the repeat occupies 237 to 259 (PVLEAWKAKIMSMIDEAKKKLNA).

This sequence belongs to the apolipoprotein A1/A4/E family. In terms of assembly, homodimer. Interacts with APOA1BP and CLU. Component of a sperm activating protein complex (SPAP), consisting of APOA1, an immunoglobulin heavy chain, an immunoglobulin light chain and albumin. Interacts with NDRG1. Interacts with SCGB3A2. Interacts with NAXE and YJEFN3. In terms of processing, glycosylated. Palmitoylated. Post-translationally, phosphorylation sites are present in the extracellular medium. Major protein of plasma HDL, also found in chylomicrons.

It is found in the secreted. Its function is as follows. Participates in the reverse transport of cholesterol from tissues to the liver for excretion by promoting cholesterol efflux from tissues and by acting as a cofactor for the lecithin cholesterol acyltransferase (LCAT). As part of the SPAP complex, activates spermatozoa motility. The protein is Apolipoprotein A-I (Apoa1) of Rattus norvegicus (Rat).